The primary structure comprises 107 residues: Large ribosomal subunit protein uL24 (107 aa).

Belongs to the universal ribosomal protein uL24 family. Part of the 50S ribosomal subunit.

One of two assembly initiator proteins, it binds directly to the 5'-end of the 23S rRNA, where it nucleates assembly of the 50S subunit. In terms of biological role, one of the proteins that surrounds the polypeptide exit tunnel on the outside of the subunit. The protein is Large ribosomal subunit protein uL24 of Mesomycoplasma hyopneumoniae (strain J / ATCC 25934 / NCTC 10110) (Mycoplasma hyopneumoniae).